Reading from the N-terminus, the 146-residue chain is Antirestriction protein KlcA (146 aa).

This sequence belongs to the antirestriction protein family.

Functionally, could be involved in overcoming restriction barriers during establishment after conjugative transfer. This Escherichia coli protein is Antirestriction protein KlcA (klcA).